Consider the following 398-residue polypeptide: Cathepsin D (398 aa).

Residues 1–20 (MAPRGLLVLLLLALVGPCAA) form the signal peptide. A propeptide spans 21-63 (LIRIPLTKFTSTRRMLTEVGSEIPDMNAITQFLKFKLGFADLA) (activation peptide). Positions 78 to 395 (YYGEIGIGTP…DRDNDSVGFA (318 aa)) constitute a Peptidase A1 domain. Aspartate 96 is an active-site residue. Residues cysteine 109 and cysteine 116 are joined by a disulfide bond. N-linked (GlcNAc...) asparagine glycans are attached at residues asparagine 133 and asparagine 251. Cysteine 274 and cysteine 278 are oxidised to a cystine. Aspartate 283 is a catalytic residue. A disulfide bridge connects residues cysteine 317 and cysteine 354.

Belongs to the peptidase A1 family. As to quaternary structure, consists of a light chain and a heavy chain. As to expression, oocytic yolk, preovulatory follicles, liver.

The protein localises to the lysosome. The enzyme catalyses Specificity similar to, but narrower than, that of pepsin A. Does not cleave the 4-Gln-|-His-5 bond in B chain of insulin.. In terms of biological role, acid protease active in intracellular protein breakdown. In chicken it is a key enzyme for yolk formation as it is capable of catalyzing intra oocytic break down of protein components of both vitellogenin and VLDL. This chain is Cathepsin D (CTSD), found in Gallus gallus (Chicken).